A 471-amino-acid polypeptide reads, in one-letter code: A-type ATP synthase subunit B (471 aa).

Belongs to the ATPase alpha/beta chains family. In terms of assembly, has multiple subunits with at least A(3), B(3), C, D, E, F, H, I and proteolipid K(x).

The protein resides in the cell membrane. In terms of biological role, component of the A-type ATP synthase that produces ATP from ADP in the presence of a proton gradient across the membrane. The B chain is a regulatory subunit. This is A-type ATP synthase subunit B from Halobacterium salinarum (strain ATCC 29341 / DSM 671 / R1).